The chain runs to 142 residues: DNA-directed RNA polymerase subunit omega (142 aa).

The interval 93 to 142 (AWSVPEAGGDEGGDASELLDDEGEGAAAGAEPDFSEMDVPLADLADEDKI) is disordered. The segment covering 100-116 (GGDEGGDASELLDDEGE) has biased composition (acidic residues).

It belongs to the RNA polymerase subunit omega family. As to quaternary structure, the RNAP catalytic core consists of 2 alpha, 1 beta, 1 beta' and 1 omega subunit. When a sigma factor is associated with the core the holoenzyme is formed, which can initiate transcription.

The catalysed reaction is RNA(n) + a ribonucleoside 5'-triphosphate = RNA(n+1) + diphosphate. In terms of biological role, promotes RNA polymerase assembly. Latches the N- and C-terminal regions of the beta' subunit thereby facilitating its interaction with the beta and alpha subunits. This Rhodospirillum centenum (strain ATCC 51521 / SW) protein is DNA-directed RNA polymerase subunit omega.